Reading from the N-terminus, the 225-residue chain is NAD(P)H-quinone oxidoreductase subunit K, chloroplastic (225 aa).

[4Fe-4S] cluster contacts are provided by C43, C44, C108, and C139.

This sequence belongs to the complex I 20 kDa subunit family. In terms of assembly, NDH is composed of at least 16 different subunits, 5 of which are encoded in the nucleus. It depends on [4Fe-4S] cluster as a cofactor.

It localises to the plastid. The protein localises to the chloroplast thylakoid membrane. The enzyme catalyses a plastoquinone + NADH + (n+1) H(+)(in) = a plastoquinol + NAD(+) + n H(+)(out). It catalyses the reaction a plastoquinone + NADPH + (n+1) H(+)(in) = a plastoquinol + NADP(+) + n H(+)(out). In terms of biological role, NDH shuttles electrons from NAD(P)H:plastoquinone, via FMN and iron-sulfur (Fe-S) centers, to quinones in the photosynthetic chain and possibly in a chloroplast respiratory chain. The immediate electron acceptor for the enzyme in this species is believed to be plastoquinone. Couples the redox reaction to proton translocation, and thus conserves the redox energy in a proton gradient. This Lactuca sativa (Garden lettuce) protein is NAD(P)H-quinone oxidoreductase subunit K, chloroplastic.